A 617-amino-acid chain; its full sequence is Acyl-CoA dehydrogenase family member 11 (617 aa).

The disordered stretch occupies residues 1–47; the sequence is MHRIGNAVRMASSSSANATITARHTQYSHAKTGGFSQTGPTLHNPYK. Residues 11 to 22 are compositionally biased toward low complexity; the sequence is ASSSSANATITA. Positions 23–41 are enriched in polar residues; the sequence is RHTQYSHAKTGGFSQTGPT. FAD is bound by residues 206-215 and 241-243; these read QWMTEKKGGS and FSS. Ser-215 contacts substrate. Substrate is bound by residues Ser-267 and Arg-334. Residues Arg-359, 366–369, Glu-437, Gly-441, and 464–466 each bind FAD; these read QSKW and EGT.

This sequence belongs to the acyl-CoA dehydrogenase family. Homotetramer; dimer of dimers.

Its function is as follows. Promotes adaption to elevated temperatures by regulating expression of the lipid desaturase, fat-7. Binds selectively and with high affinity to fatty acids with chain lengths from C10 to C12 and prevents them from activating fat-7 expression mediated by the nuclear hormone receptor nhr-49, leading to low levels of membrane lipid desaturation and membrane fluidity for adaption to heat. The polypeptide is Acyl-CoA dehydrogenase family member 11 (Caenorhabditis elegans).